The chain runs to 59 residues: Large ribosomal subunit protein bL32 (59 aa).

A compositionally biased stretch (basic residues) spans 1 to 16; the sequence is MAVPKRKTSPSKRGMR. Residues 1–20 form a disordered region; the sequence is MAVPKRKTSPSKRGMRRSHD.

The protein belongs to the bacterial ribosomal protein bL32 family.

In Sphingopyxis alaskensis (strain DSM 13593 / LMG 18877 / RB2256) (Sphingomonas alaskensis), this protein is Large ribosomal subunit protein bL32.